A 190-amino-acid polypeptide reads, in one-letter code: Glutathione peroxidase 2 (190 aa).

The active site involves Sec40. Sec40 is a non-standard amino acid (selenocysteine).

Belongs to the glutathione peroxidase family. In terms of assembly, homotetramer.

It is found in the cytoplasm. Its subcellular location is the cytosol. The catalysed reaction is 2 glutathione + H2O2 = glutathione disulfide + 2 H2O. It catalyses the reaction a hydroperoxy polyunsaturated fatty acid + 2 glutathione = a hydroxy polyunsaturated fatty acid + glutathione disulfide + H2O. The enzyme catalyses tert-butyl hydroperoxide + 2 glutathione = tert-butanol + glutathione disulfide + H2O. It carries out the reaction cumene hydroperoxide + 2 glutathione = 2-phenylpropan-2-ol + glutathione disulfide + H2O. The catalysed reaction is (13S)-hydroperoxy-(9Z,11E)-octadecadienoate + 2 glutathione = (13S)-hydroxy-(9Z,11E)-octadecadienoate + glutathione disulfide + H2O. It catalyses the reaction (5S)-hydroperoxy-(6E,8Z,11Z,14Z)-eicosatetraenoate + 2 glutathione = (5S)-hydroxy-(6E,8Z,11Z,14Z)-eicosatetraenoate + glutathione disulfide + H2O. The enzyme catalyses (12R)-hydroperoxy-(5Z,8Z,10E,14Z)-eicosatetraenoate + 2 glutathione = (12R)-hydroxy-(5Z,8Z,10E,14Z)-eicosatetraenoate + glutathione disulfide + H2O. It carries out the reaction (15S)-hydroperoxy-(5Z,8Z,11Z,13E)-eicosatetraenoate + 2 glutathione = (15S)-hydroxy-(5Z,8Z,11Z,13E)-eicosatetraenoate + glutathione disulfide + H2O. Functionally, catalyzes the reduction of hydroperoxides in a glutathione-dependent manner thus regulating cellular redox homeostasis. Can reduce small soluble hydroperoxides such as H2O2, cumene hydroperoxide and tert-butyl hydroperoxide, as well as several fatty acid-derived hydroperoxides. Cannot reduce phosphatidycholine hydroperoxide. The sequence is that of Glutathione peroxidase 2 (Gpx2) from Mus musculus (Mouse).